The chain runs to 427 residues: Peptidase B (427 aa).

Residues lysine 195 and aspartate 200 each contribute to the Mn(2+) site. Lysine 207 is an active-site residue. Residues aspartate 218, aspartate 277, and glutamate 279 each coordinate Mn(2+). Arginine 281 is a catalytic residue.

It belongs to the peptidase M17 family. As to quaternary structure, homohexamer. The cofactor is Mn(2+).

It localises to the cytoplasm. It catalyses the reaction Release of an N-terminal amino acid, Xaa, from a peptide or arylamide. Xaa is preferably Glu or Asp but may be other amino acids, including Leu, Met, His, Cys and Gln.. Probably plays an important role in intracellular peptide degradation. The polypeptide is Peptidase B (Shigella flexneri serotype 5b (strain 8401)).